We begin with the raw amino-acid sequence, 262 residues long: Global transcriptional regulator CodY (262 aa).

The interval 1–159 (MAHLLEKTRK…ASTVVGIQLL (159 aa)) is GAF domain. A DNA-binding region (H-T-H motif) is located at residues 207–226 (ASVIADRIGITRSVIVNALR).

This sequence belongs to the CodY family.

It is found in the cytoplasm. Functionally, DNA-binding global transcriptional regulator which is involved in the adaptive response to starvation and acts by directly or indirectly controlling the expression of numerous genes in response to nutrient availability. During rapid exponential growth, CodY is highly active and represses genes whose products allow adaptation to nutrient depletion. This chain is Global transcriptional regulator CodY, found in Streptococcus pneumoniae serotype 4 (strain ATCC BAA-334 / TIGR4).